Reading from the N-terminus, the 399-residue chain is Enoyl-[acyl-carrier-protein] reductase [NADH] (399 aa).

NAD(+) contacts are provided by residues 48 to 53, 74 to 75, 111 to 112, and 139 to 140; these read GASTGY, FE, DA, and LA. Position 225 (Y225) interacts with substrate. Y235 acts as the Proton donor in catalysis. NAD(+) contacts are provided by residues K244 and 274–276; that span reads VVT.

This sequence belongs to the TER reductase family. In terms of assembly, monomer.

The enzyme catalyses a 2,3-saturated acyl-[ACP] + NAD(+) = a (2E)-enoyl-[ACP] + NADH + H(+). Its pathway is lipid metabolism; fatty acid biosynthesis. Its function is as follows. Involved in the final reduction of the elongation cycle of fatty acid synthesis (FAS II). Catalyzes the reduction of a carbon-carbon double bond in an enoyl moiety that is covalently linked to an acyl carrier protein (ACP). This Erwinia tasmaniensis (strain DSM 17950 / CFBP 7177 / CIP 109463 / NCPPB 4357 / Et1/99) protein is Enoyl-[acyl-carrier-protein] reductase [NADH].